The primary structure comprises 451 residues: Kynureninase (451 aa).

Pyridoxal 5'-phosphate contacts are provided by residues leucine 131, serine 132, 159–162 (FPSD), serine 215, aspartate 244, histidine 247, and tyrosine 269. Lysine 270 is subject to N6-(pyridoxal phosphate)lysine. Tryptophan 303 and asparagine 331 together coordinate pyridoxal 5'-phosphate.

This sequence belongs to the kynureninase family. Homodimer. Pyridoxal 5'-phosphate is required as a cofactor.

It is found in the cytoplasm. It carries out the reaction L-kynurenine + H2O = anthranilate + L-alanine + H(+). The catalysed reaction is 3-hydroxy-L-kynurenine + H2O = 3-hydroxyanthranilate + L-alanine + H(+). It functions in the pathway amino-acid degradation; L-kynurenine degradation; L-alanine and anthranilate from L-kynurenine: step 1/1. It participates in cofactor biosynthesis; NAD(+) biosynthesis; quinolinate from L-kynurenine: step 2/3. Functionally, catalyzes the cleavage of L-kynurenine (L-Kyn) and L-3-hydroxykynurenine (L-3OHKyn) into anthranilic acid (AA) and 3-hydroxyanthranilic acid (3-OHAA), respectively. The protein is Kynureninase of Dictyostelium discoideum (Social amoeba).